Consider the following 413-residue polypeptide: Protein FAM8A1 (413 aa).

Residues 1–10 (MAEGPEEARG) show a composition bias toward basic and acidic residues. Residues 1 to 105 (MAEGPEEARG…PEAAAPRERP (105 aa)) are disordered. The segment covering 49–64 (APGRPTAPGLAAAAAA) has biased composition (low complexity). Residues 65–78 (DKLEPPRELRKRGE) show a composition bias toward basic and acidic residues. The tract at residues 107–139 (RLSAREYSRQVHEWLWQSYCGYLTWHSGLAAFP) is necessary and sufficient to interact with SYVN1. Residues 217-236 (PVTRVGSAAPSRSPSETGRQ) form a disordered region. Phosphoserine is present on S229. The region spanning 242–408 (VIPSLAHRFM…DIVAGTIVVK (167 aa)) is the RDD domain. The next 3 helical transmembrane spans lie at 257-277 (FFIL…LSGI), 304-324 (MMVV…ICIW), and 371-391 (ALIK…LLFF).

In terms of assembly, component of the HRD1 complex, which comprises at least SYNV1/HRD1, FAM8A1, HERPUD1/HERP, OS9, SEL1L and UBE2J1. This interaction stabilizes FAM8A1 protein, preventing its proteasomal degradation. FAM8A1 binding to SYNV1 may promote recruitment of HERPUD1 to the HRD1 complex. As to expression, ubiquitously expressed, with a higher level of expression in testis.

It is found in the membrane. Functionally, plays a role in the assembly of the HRD1 complex, a complex involved in the ubiquitin-proteasome-dependent process of ER-associated degradation (ERAD). In Homo sapiens (Human), this protein is Protein FAM8A1 (FAM8A1).